A 521-amino-acid chain; its full sequence is Maturase K (521 aa).

It belongs to the intron maturase 2 family. MatK subfamily.

It localises to the plastid. The protein localises to the chloroplast. Usually encoded in the trnK tRNA gene intron. Probably assists in splicing its own and other chloroplast group II introns. This Trillium erectum (Beth root) protein is Maturase K.